A 192-amino-acid polypeptide reads, in one-letter code: Orotate phosphoribosyltransferase 2 (192 aa).

5-phospho-alpha-D-ribose 1-diphosphate is bound at residue 116–124; sequence EDIVTTGLS. Orotate is bound by residues threonine 120 and arginine 148.

This sequence belongs to the purine/pyrimidine phosphoribosyltransferase family. PyrE subfamily. In terms of assembly, homodimer. Mg(2+) is required as a cofactor.

It carries out the reaction orotidine 5'-phosphate + diphosphate = orotate + 5-phospho-alpha-D-ribose 1-diphosphate. Its pathway is pyrimidine metabolism; UMP biosynthesis via de novo pathway; UMP from orotate: step 1/2. Catalyzes the transfer of a ribosyl phosphate group from 5-phosphoribose 1-diphosphate to orotate, leading to the formation of orotidine monophosphate (OMP). This Mesorhizobium japonicum (strain LMG 29417 / CECT 9101 / MAFF 303099) (Mesorhizobium loti (strain MAFF 303099)) protein is Orotate phosphoribosyltransferase 2.